A 209-amino-acid polypeptide reads, in one-letter code: Small ribosomal subunit protein uS3 (209 aa).

Positions 17–86 (IDEYLEKELR…NPQIEVEEIK (70 aa)) constitute a KH type-2 domain.

Belongs to the universal ribosomal protein uS3 family. In terms of assembly, part of the 30S ribosomal subunit.

Functionally, binds the lower part of the 30S subunit head. The polypeptide is Small ribosomal subunit protein uS3 (Thermococcus gammatolerans (strain DSM 15229 / JCM 11827 / EJ3)).